The following is a 291-amino-acid chain: Quinol oxidase subunit 2 (291 aa).

The N-terminal stretch at 1–28 is a signal peptide; sequence MQLKKAFWKLASLLPLSLLLFLGGCDKK. Helical transmembrane passes span 49–69 and 91–111; these read SFLLMSLIIAIVFILFTVILI and LEIIWTLVPVIIVIALSIPTV.

This sequence belongs to the cytochrome c oxidase subunit 2 family.

The protein resides in the cell membrane. The catalysed reaction is 2 a quinol + O2 = 2 a quinone + 2 H2O. Catalyzes quinol oxidation with the concomitant reduction of oxygen to water. Subunit II transfers the electrons from a quinol to the binuclear center of the catalytic subunit I. The chain is Quinol oxidase subunit 2 from Bacillus anthracis.